The primary structure comprises 589 residues: Parathyroid hormone/parathyroid hormone-related peptide receptor (589 aa).

The signal sequence occupies residues 1–28; that stretch reads MGAARIAPGLALLLCCPVLSSAYALVDA. Residues 29–188 lie on the Extracellular side of the membrane; sequence DDVMTKEEQI…REREVFDRLG (160 aa). Cystine bridges form between Cys48-Cys117, Cys108-Cys148, and Cys131-Cys170. Residues 64 to 105 are disordered; the sequence is ESDKGWASASTSGKPKKEKPSGKLHPESEEDKEVPTGSRPRG. Residues 81–90 show a composition bias toward basic and acidic residues; sequence EKPSGKLHPE. Residues Asn151, Asn161, Asn166, and Asn176 are each glycosylated (N-linked (GlcNAc...) asparagine). The helical transmembrane segment at 189-209 threads the bilayer; the sequence is MIYTVGYSVSLASLTVAVLIL. Residues 210–223 lie on the Cytoplasmic side of the membrane; the sequence is AYFRRLHCTRNYIH. Residues 224–244 form a helical membrane-spanning segment; the sequence is MHLFLSFMLRAVSIFVKDAVL. Residues 245–294 are Extracellular-facing; that stretch reads YSGTALDEAERLTEEELRAIAQAPPPPAAAAGYVGCRVAVTFFLYFLATN. Residues 295 to 315 form a helical membrane-spanning segment; the sequence is YYWILVEGLYLHSLIFMAFFS. At 316–318 the chain is on the cytoplasmic side; sequence EKK. A helical transmembrane segment spans residues 319–339; that stretch reads YLWGFTVFGWGLPAIFVAVWV. The Extracellular segment spans residues 340 to 360; sequence SVRATLANTGCWDLSSGNKKW. The helical transmembrane segment at 361–381 threads the bilayer; that stretch reads IIQVPILASIVLNFILFINIV. Over 382–404 the chain is Cytoplasmic; the sequence is RVLATKLRETNAGRCDTRQQYRK. A helical membrane pass occupies residues 405–425; that stretch reads LLKSTLVLMPLFGVHYIVFMA. At 426-439 the chain is on the extracellular side; that stretch reads TPYTEVSGTLWQVQ. Residues 440 to 460 traverse the membrane as a helical segment; that stretch reads MHYEMLFNSFQGFFVAIIYCF. The Cytoplasmic portion of the chain corresponds to 461 to 589; that stretch reads CNGEVQAEIK…LLQEEWETVM (129 aa). The Important for interaction with G proteins motif lies at 473–476; the sequence is WSRW. Residues 524-549 form a disordered region; that stretch reads AATTNGHPPLPGHTKSGSPALQATPP. Phosphothreonine is present on Thr547.

Belongs to the G-protein coupled receptor 2 family. As to quaternary structure, homodimer in the absence of bound ligand. Peptide hormone binding leads to dissociation of the homodimer. Post-translationally, N-glycosylated.

It localises to the cell membrane. G-protein-coupled receptor for parathyroid hormone (PTH) and for parathyroid hormone-related peptide (PTHLH). Ligand binding causes a conformation change that triggers signaling via guanine nucleotide-binding proteins (G proteins) and modulates the activity of downstream effectors, such as adenylate cyclase (cAMP). PTH1R is coupled to G(s) G alpha proteins and mediates activation of adenylate cyclase activity. PTHLH dissociates from PTH1R more rapidly than PTH; as consequence, the cAMP response induced by PTHLH decays faster than the response induced by PTH. The sequence is that of Parathyroid hormone/parathyroid hormone-related peptide receptor (PTH1R) from Bos taurus (Bovine).